Consider the following 299-residue polypeptide: Ribosomal protein uL3 glutamine methyltransferase (299 aa).

The protein belongs to the protein N5-glutamine methyltransferase family. PrmB subfamily.

It carries out the reaction L-glutaminyl-[ribosomal protein uL3] + S-adenosyl-L-methionine = N(5)-methyl-L-glutaminyl-[ribosomal protein uL3] + S-adenosyl-L-homocysteine + H(+). Methylates large ribosomal subunit protein uL3 on a specific glutamine residue. In Neisseria gonorrhoeae (strain ATCC 700825 / FA 1090), this protein is Ribosomal protein uL3 glutamine methyltransferase.